A 197-amino-acid chain; its full sequence is Pyridoxal 5'-phosphate synthase subunit PdxT (197 aa).

53–55 (GES) is an L-glutamine binding site. Cys85 serves as the catalytic Nucleophile. Residues Arg114 and 142–143 (IR) each bind L-glutamine. Active-site charge relay system residues include His179 and Glu181.

This sequence belongs to the glutaminase PdxT/SNO family. In the presence of PdxS, forms a dodecamer of heterodimers. Only shows activity in the heterodimer.

The enzyme catalyses aldehydo-D-ribose 5-phosphate + D-glyceraldehyde 3-phosphate + L-glutamine = pyridoxal 5'-phosphate + L-glutamate + phosphate + 3 H2O + H(+). It carries out the reaction L-glutamine + H2O = L-glutamate + NH4(+). It participates in cofactor biosynthesis; pyridoxal 5'-phosphate biosynthesis. In terms of biological role, catalyzes the hydrolysis of glutamine to glutamate and ammonia as part of the biosynthesis of pyridoxal 5'-phosphate. The resulting ammonia molecule is channeled to the active site of PdxS. The sequence is that of Pyridoxal 5'-phosphate synthase subunit PdxT from Thermococcus kodakarensis (strain ATCC BAA-918 / JCM 12380 / KOD1) (Pyrococcus kodakaraensis (strain KOD1)).